We begin with the raw amino-acid sequence, 928 residues long: MSRFFANGSDSESESSEEEVPTQFNNKAQNFQFSDDEEEVKRVVRSTKEKRYENLTSIIKTIRNHKKIKDIPNTLSSFEDLTRAYTKALPVISKEENGITPRFYIRCLAELEDFINEVWEDREGRKNLSKNNSKSLGTLRQKVRKYIKDFEDDLARFREAPDQESDVDEGEGDVHDSDADRAGDDSDTGFGVGAKMAELPKAAKSSVQPTKIIADDDDSEDSIDWDPDTESETESSEDENMYQNMRERFLKRTTEKEDKDDDKRKDKRKEQKHKVRKRADDDEDGEGWETVVKGNVVEKPKMFEKDAEIDVPLVLAKLIEIMSARGKKRTDRRLQIDLLFELRDISEQHSLGTAVAIKIHFSIISAIFDYNLKISEPMKLEHWALLLEVMQSMMKLLLANPDINMNESIAEEHEEYATAPFYVRGCPLAAVERLDDEFTKLLKECDPHSNDYVSRLKDEVNVVKTIELVVQYFELSGSNNERCRIYLRKIEHLYYKFDPEVLKRKRGEQQPATGAAGATPAAPVQSSVEVMDKLCKFIYAKDDTDRIRTRAILAHIYHHAMHDNWFQARDLVLMSHLQDNIDAADPSTRILYNRMMANLGLCAFRQENIKDAHHCLVDLMVTGKPKELLAQGLLPQRQHERSAEQEKIEKQRQMPFHMHINLELLECVYLVSAMLLEIPYIAAHEFDARRRMISKTFYQQLRSSERQSLVGPPESMREHVVAAAKAMRCGNWQACANFIVNKKMNTKVWDLFYESERVREMLVKFIKEESLRTYLFTYSNVYTSISIPSLSQMYELPLPKVHSIISKMIINEELMASLDDPSETVVMHRSEPSRLQALAMQFVDKVTNLVDVNEKVFDMKQGNFFQRGNMGNRDRGYNRNQNNQGGNWGGQRRDNRSQRNRNQRGHHKQNQQQNQQQQQQQVHTIDEE.

Disordered stretches follow at residues M1 to E37 and F157 to E286. Over residues S11 to V20 the composition is skewed to acidic residues. Residues T22–F33 are compositionally biased toward polar residues. 4 positions are modified to phosphoserine: S34, S165, S177, and S186. Acidic residues predominate over residues D162–E171. Residues G172–D184 show a composition bias toward basic and acidic residues. Acidic residues predominate over residues D215–N240. Positions M245 to R264 are enriched in basic and acidic residues. Positions K265–K277 are enriched in basic residues. The PCI domain occupies F656–P832. The tract at residues F864–E928 is disordered. The span at Q898–Q909 shows a compositional bias: basic residues. A compositionally biased stretch (low complexity) spans N910–Q921.

Belongs to the eIF-3 subunit C family. In terms of assembly, component of the eukaryotic translation initiation factor 3 (eIF-3) complex. The eIF-3 complex interacts with pix.

It localises to the cytoplasm. Component of the eukaryotic translation initiation factor 3 (eIF-3) complex, which is involved in protein synthesis of a specialized repertoire of mRNAs and, together with other initiation factors, stimulates binding of mRNA and methionyl-tRNAi to the 40S ribosome. The eIF-3 complex specifically targets and initiates translation of a subset of mRNAs involved in cell proliferation. In Drosophila grimshawi (Hawaiian fruit fly), this protein is Eukaryotic translation initiation factor 3 subunit C.